A 101-amino-acid chain; its full sequence is MVALGHYLTLGAILFALSVIGIFLNRKNLIVLLMCIELMLLAVNLNFVAFSHYLGDMAGQVFVFFILTVAAAESAIGLAILVVLFRNRSTINVDELDTLKG.

Transmembrane regions (helical) follow at residues 4–24 (LGHY…GIFL), 30–50 (IVLL…FVAF), and 61–81 (VFVF…LAIL).

Belongs to the complex I subunit 4L family. As to quaternary structure, NDH-1 is composed of 14 different subunits. Subunits NuoA, H, J, K, L, M, N constitute the membrane sector of the complex.

It is found in the cell inner membrane. It catalyses the reaction a quinone + NADH + 5 H(+)(in) = a quinol + NAD(+) + 4 H(+)(out). Functionally, NDH-1 shuttles electrons from NADH, via FMN and iron-sulfur (Fe-S) centers, to quinones in the respiratory chain. The immediate electron acceptor for the enzyme in this species is believed to be ubiquinone. Couples the redox reaction to proton translocation (for every two electrons transferred, four hydrogen ions are translocated across the cytoplasmic membrane), and thus conserves the redox energy in a proton gradient. The chain is NADH-quinone oxidoreductase subunit K from Leptothrix cholodnii (strain ATCC 51168 / LMG 8142 / SP-6) (Leptothrix discophora (strain SP-6)).